A 189-amino-acid chain; its full sequence is Inner membrane-spanning protein YciB (189 aa).

A run of 5 helical transmembrane segments spans residues 3–23, 47–67, 76–96, 121–141, and 149–169; these read LLID…WGIY, IEPM…ATLL, WKPT…QLFF, WSWT…AHAF, and FKLF…ALYL.

It belongs to the YciB family.

Its subcellular location is the cell inner membrane. Functionally, plays a role in cell envelope biogenesis, maintenance of cell envelope integrity and membrane homeostasis. The chain is Inner membrane-spanning protein YciB from Paracidovorax citrulli (strain AAC00-1) (Acidovorax citrulli).